Consider the following 231-residue polypeptide: ATP phosphoribosyltransferase (231 aa).

It belongs to the ATP phosphoribosyltransferase family. Short subfamily. In terms of assembly, heteromultimer composed of HisG and HisZ subunits.

The protein resides in the cytoplasm. The catalysed reaction is 1-(5-phospho-beta-D-ribosyl)-ATP + diphosphate = 5-phospho-alpha-D-ribose 1-diphosphate + ATP. Its pathway is amino-acid biosynthesis; L-histidine biosynthesis; L-histidine from 5-phospho-alpha-D-ribose 1-diphosphate: step 1/9. Catalyzes the condensation of ATP and 5-phosphoribose 1-diphosphate to form N'-(5'-phosphoribosyl)-ATP (PR-ATP). Has a crucial role in the pathway because the rate of histidine biosynthesis seems to be controlled primarily by regulation of HisG enzymatic activity. The chain is ATP phosphoribosyltransferase (hisG) from Sinorhizobium fredii (strain NBRC 101917 / NGR234).